Reading from the N-terminus, the 537-residue chain is O-phosphoserine--tRNA(Cys) ligase (537 aa).

Residues 186 to 188 (HMT), 231 to 233 (SAS), 273 to 274 (YY), and Asn-317 each bind substrate.

The protein belongs to the class-II aminoacyl-tRNA synthetase family. O-phosphoseryl-tRNA(Cys) synthetase subfamily. Homotetramer. Interacts with SepCysS.

It carries out the reaction tRNA(Cys) + O-phospho-L-serine + ATP = O-phospho-L-seryl-tRNA(Cys) + AMP + diphosphate. Its function is as follows. Catalyzes the attachment of O-phosphoserine (Sep) to tRNA(Cys). In Methanococcus maripaludis (strain C7 / ATCC BAA-1331), this protein is O-phosphoserine--tRNA(Cys) ligase.